A 450-amino-acid chain; its full sequence is UDP-N-acetylmuramoylalanine--D-glutamate ligase (450 aa).

Gly-119–Thr-125 serves as a coordination point for ATP.

This sequence belongs to the MurCDEF family.

It localises to the cytoplasm. It carries out the reaction UDP-N-acetyl-alpha-D-muramoyl-L-alanine + D-glutamate + ATP = UDP-N-acetyl-alpha-D-muramoyl-L-alanyl-D-glutamate + ADP + phosphate + H(+). The protein operates within cell wall biogenesis; peptidoglycan biosynthesis. Its function is as follows. Cell wall formation. Catalyzes the addition of glutamate to the nucleotide precursor UDP-N-acetylmuramoyl-L-alanine (UMA). The polypeptide is UDP-N-acetylmuramoylalanine--D-glutamate ligase (Streptococcus thermophilus (strain CNRZ 1066)).